The following is a 506-amino-acid chain: MNAMAKLIMVQGTSSNVGKSILVTALCRIFKQDGYKVAPFKSQNMALNAFVTQEGGEIGRAQAVQAEACGIAPSVDMNPILMKPEADSKSQIVVNGKVDRTISAREYYEYAPLLLDTALAALNRLREQNDIVVIEGAGSPAEINLRQREIVNMRIAKTAGAPVLLAGDIDRGGVFASLIGTIDLLEPEERSYVKGYLINKFRGDASLLKPAIDVLEDRTSIPVLGIIPYLRNMAIAQEDSVYLDECKSGLGETDLDIAVIRLPRISNYDDFDALATDGASVRFVSKTGEIGNPDLIIIPGTKSTIPDMEYLWQNGLAETIIKKAGKGTHVLGVCGGYQILGKMIYDPHKTESETTELKGLGLLDTETTFEKEKSTTQVSGQVRFNNGLLADMAGCEVGGYEIHMGRTRLFTAQPAFQITKTPKGPADYLDGASNAEGTVLGTYIHGIFESDSFRRGFLNAIRRYKGIPERQAGYFDRDKEYDKLADIVRASIDMNKIYDILNEGIR.

The GATase cobBQ-type domain maps to 254-453; sequence DLDIAVIRLP…IHGIFESDSF (200 aa). The active-site Nucleophile is cysteine 334. Histidine 445 is an active-site residue.

The protein belongs to the CobB/CobQ family. CobQ subfamily.

It participates in cofactor biosynthesis; adenosylcobalamin biosynthesis. In terms of biological role, catalyzes amidations at positions B, D, E, and G on adenosylcobyrinic A,C-diamide. NH(2) groups are provided by glutamine, and one molecule of ATP is hydrogenolyzed for each amidation. The sequence is that of Cobyric acid synthase from Dehalococcoides mccartyi (strain ATCC BAA-2266 / KCTC 15142 / 195) (Dehalococcoides ethenogenes (strain 195)).